A 252-amino-acid chain; its full sequence is Oil body-associated protein 2A (252 aa).

Positions M1 to T31 are disordered. The segment covering S22–T31 has biased composition (low complexity).

Belongs to the OBAP family.

This chain is Oil body-associated protein 2A, found in Zea mays (Maize).